We begin with the raw amino-acid sequence, 106 residues long: Large ribosomal subunit protein eL42 (106 aa).

Residues 26–53 (YKKGKDSLYAQGKRRYDRKQSGYGGQTK) are disordered.

Belongs to the eukaryotic ribosomal protein eL42 family. As to quaternary structure, component of the large ribosomal subunit.

The protein localises to the cytoplasm. Its function is as follows. Component of the large ribosomal subunit. The ribosome is a large ribonucleoprotein complex responsible for the synthesis of proteins in the cell. This is Large ribosomal subunit protein eL42 (rpl36a) from Danio rerio (Zebrafish).